The sequence spans 266 residues: Large ribosomal subunit protein eL8 (266 aa).

Residues Lys-11, Lys-20, and Lys-21 each participate in a glycyl lysine isopeptide (Lys-Gly) (interchain with G-Cter in SUMO2) cross-link. Lys-34 bears the N6-acetyllysine mark. A Glycyl lysine isopeptide (Lys-Gly) (interchain with G-Cter in SUMO2) cross-link involves residue Lys-48. Lys-97 carries the post-translational modification N6-acetyllysine; alternate. A Glycyl lysine isopeptide (Lys-Gly) (interchain with G-Cter in SUMO2); alternate cross-link involves residue Lys-97. Lys-125 is covalently cross-linked (Glycyl lysine isopeptide (Lys-Gly) (interchain with G-Cter in SUMO2)). Lys-217 is subject to N6-acetyllysine. Lys-245 is covalently cross-linked (Glycyl lysine isopeptide (Lys-Gly) (interchain with G-Cter in SUMO2)).

This sequence belongs to the eukaryotic ribosomal protein eL8 family. In terms of assembly, component of the large ribosomal subunit. Interacts with CRY1. Interacts with DICER1, AGO2, TARBP2, MOV10 and EIF6; they form a large RNA-induced silencing complex (RISC).

The protein resides in the cytoplasm. Component of the large ribosomal subunit. The ribosome is a large ribonucleoprotein complex responsible for the synthesis of proteins in the cell. In Bos taurus (Bovine), this protein is Large ribosomal subunit protein eL8 (RPL7A).